The sequence spans 177 residues: GTP-dependent dephospho-CoA kinase (177 aa).

GTP-binding residues include D48, V49, V50, D67, K69, E124, and D147.

The protein belongs to the GTP-dependent DPCK family.

It catalyses the reaction 3'-dephospho-CoA + GTP = GDP + CoA + H(+). The protein operates within cofactor biosynthesis; coenzyme A biosynthesis. Its function is as follows. Catalyzes the GTP-dependent phosphorylation of the 3'-hydroxyl group of dephosphocoenzyme A to form coenzyme A (CoA). The polypeptide is GTP-dependent dephospho-CoA kinase (Thermococcus onnurineus (strain NA1)).